The following is a 795-amino-acid chain: Volume-regulated anion channel subunit LRRC8E (795 aa).

The Cytoplasmic segment spans residues 1–22 (MIPVAEFKQFTEQQPAFKVLKP). The helical transmembrane segment at 23-43 (WWDVLAEYLTVAMLMIGVFGC) threads the bilayer. Residues 44-116 (TLQVTQDKII…YETALHWYAK (73 aa)) are Extracellular-facing. The cysteines at positions 54 and 300 are disulfide-linked. The N-linked (GlcNAc...) asparagine glycan is linked to Asn-63. Residues 117–137 (YFPYLVVIHTLIFMVCTSFWF) form a helical membrane-spanning segment. The Cytoplasmic segment spans residues 138-264 (KFPGTSSKIE…IRQTVLKVCK (127 aa)). A helical membrane pass occupies residues 265–285 (FFAILVYNLIYVEKISFLVAC). Residues 286–312 (RVETSEITGYASFCCNHTKAHLFSKLA) lie on the Extracellular side of the membrane. Asn-301 carries N-linked (GlcNAc...) asparagine glycosylation. A helical membrane pass occupies residues 313 to 333 (FCYISFVCVYGITCLYTLYWL). Topologically, residues 334-795 (FHRPLKEYSF…AEVREKMEEE (462 aa)) are cytoplasmic. 10 LRR repeats span residues 535-556 (QLKV…TDVA), 558-578 (HLQR…NSLK), 582-603 (VLRE…IFSL), 605-626 (ALQE…LSFQ), 630-651 (KLVT…VRKL), 653-674 (SLEQ…LGQC), 676-697 (GLRL…LGLL), 699-720 (SLQH…LFFC), 722-744 (KLRT…AALQ), and 745-766 (ALSR…LGDC).

Belongs to the LRRC8 family. As to quaternary structure, heterohexamer; oligomerizes with other LRRC8 proteins (LRRC8A, LRRC8C, LRRC8D and/or LRRC8B) to form a heterohexamer. In vivo, the subunit composition may depend primarily on expression levels, and heterooligomeric channels containing various proportions of the different LRRC8 proteins may coexist.

It is found in the cell membrane. The protein resides in the endoplasmic reticulum membrane. It localises to the lysosome membrane. The catalysed reaction is chloride(in) = chloride(out). It carries out the reaction iodide(out) = iodide(in). It catalyses the reaction taurine(out) = taurine(in). The enzyme catalyses 2',3'-cGAMP(out) = 2',3'-cGAMP(in). Its function is as follows. Non-essential component of the volume-regulated anion channel (VRAC, also named VSOAC channel), an anion channel required to maintain a constant cell volume in response to extracellular or intracellular osmotic changes. The VRAC channel conducts iodide better than chloride and can also conduct organic osmolytes like taurine. Mediates efflux of amino acids, such as aspartate, in response to osmotic stress. The VRAC channel also mediates transport of immunoreactive cyclic dinucleotide GMP-AMP (2'-3'-cGAMP), an immune messenger produced in response to DNA virus in the cytosol. Channel activity requires LRRC8A plus at least one other family member (LRRC8B, LRRC8C, LRRC8D or LRRC8E); channel characteristics depend on the precise subunit composition. Also plays a role in lysosome homeostasis by forming functional lysosomal VRAC channels in response to low cytoplasmic ionic strength condition: lysosomal VRAC channels are necessary for the formation of large lysosome-derived vacuoles, which store and then expel excess water to maintain cytosolic water homeostasis. The protein is Volume-regulated anion channel subunit LRRC8E of Mus musculus (Mouse).